A 237-amino-acid chain; its full sequence is MKKQNIPKEISEFITKEEIVMFQELQIKIAELNNKTNLTRLIKGDDYWISQVFDSIWPFKTFPNINFDNKKFLDIGSGCGFPGLAYAITHPNSEIYLIDSSKKKTDALKLLIKEINFKNNIHIINDRIENLAHQSSMRNSFNIATTRAVSNPSTVSEYILPMLKKEGLGVLYCGKWTDEENKNLDKTLEILEGKFKETKKILLPRSKGTRNIILIQPKNLCPEIYPRKIGKPEKHPL.

Residues Gly76, Phe81, Asp99 to Ser101, Ile128 to Glu129, and Arg147 contribute to the S-adenosyl-L-methionine site.

It belongs to the methyltransferase superfamily. RNA methyltransferase RsmG family.

The protein resides in the cytoplasm. Its function is as follows. Specifically methylates the N7 position of a guanine in 16S rRNA. This is Ribosomal RNA small subunit methyltransferase G from Prochlorococcus marinus (strain MIT 9312).